A 1463-amino-acid chain; its full sequence is MPLLSLSLLLLLLQVPAGSAETAAWAVTPERLREWQDKGIFIIQSENLEKCIQASKSTLTLENCKPPNKYMLWKWVSNHRLFNIGGSGCLGLNVSSPEQPLSIYECDSTHVSLKWHCNKKTITGPLQYLVQVKQDNTLVASRKYLHKWVSYMSGGGGICDYLHKDLYTIKGNAHGTPCMFPFQYNQQWHHECTREGREDNLLWCATTSRYERDEKWGFCPDPTSTEVGCDAVWEKDLHSRICYQFNLLSSLSWSEAHSSCQMQGAALLSIADETEENFVRKHLGSEAVEVWMGLNQLDEDAGWQWSDRTPLNYLNWKPEINFEPFVEYHCGTFNAFMPKAWKSRDCESTLPYVCKKYLNPTDHGVVEKDAWKYYATHCEPGWNPHNRNCYKLQKEKKTWNEALQSCQSNNSVLTDITSLAEVEFLVTLLGDENASETWIGLSSHKIPVSFEWSNGSSVTFTNWHTLEPHIFPNRSQLCVSAEQSEGHWKVKNCEETLFYLCKKTGLVLSDTESGCQKGWERHGKFCYKIDTVLRSFDHASSGYYCPPALITITSRFEQAFITSLISSVVKTKDTYFWIALQDQNNTGEYTWKTAGQQLEPVKYTHWNTRQPRYSGGCVVMRGRSHPGRWEVRDCRHFKAMSLCKQPVENREKTKQEEGWPFHPCYLDWESEPGLASCFKVFHSEKVLMKRTWRQAEEFCEEFGAHLASFAHIEEENFVNELLHSKFNRTEERQFWIGFNKRNPLNAGSWEWSDGTPVVSSFLDNSYFGEDARNCAVYKANKTLLPSYCGSKREWICKIPRDVRPKVPPWYQYDAPWLFYQDAEYLFHISASEWSSFEFVCGWLRSDILTIHSAHEQEFIHSKIRALSKYGVNWWIGLREERASDEFRWRDGSPVIYQNWDKGKERSMGLNESQRCGFISSITGLWASEECSISMPSICKRKKVWVIEKKKDIPKQHGTCPKGWLYFDYKCLLLKIPEGPSDWKNWTSAQDFCVEEGGTLVAIENEVEQAFITMNLFGHTTNVWIGLQDDDYEKWLNGRPVSYSNWSPFDTKNIPNHNTTEVQKRIPLCGLLSNNPNFHFTGKWYFEDCREGYGFVCEKMQDASGHSINTSDMYPIPNTLEYGNRTYKIINANMTWYTALKTCLMHGAELASITDQYHQSFLTVILNRVGYAHWIGLFTEDNGLSFDWSDGTKSSFTFWKDDESSFLGDCVFADTSGRWSSTACESYLQGAICQVPTETRLSGRLELCSETSIPWIKFKSNCYSFSTVLESTSFEAAHEFCKKKGSNLLTIKDEAENSFLLEELLAFRSSVQMIWLNAQFDGDNETIKWFDGTPTDQSNWGIRKPEVYHFKPHLCVALRIPEGVWQLSSCQDKKGFICKMEADIHTVKKHPGKGPSHSVIPLTVALTLLVILAISTLSFCMYKHSHIIFGRLAQFRNPYYPSANFSTVHLEENILISDLEKNDQ.

A signal peptide spans 1–20; it reads MPLLSLSLLLLLLQVPAGSA. Topologically, residues 21 to 1392 are extracellular; the sequence is ETAAWAVTPE…IHTVKKHPGK (1372 aa). Positions 38-115 constitute a Ricin B-type lectin domain; the sequence is KGIFIIQSEN…CDSTHVSLKW (78 aa). The N-linked (GlcNAc...) asparagine glycan is linked to N93. Positions 173–221 constitute a Fibronectin type-II domain; that stretch reads AHGTPCMFPFQYNQQWHHECTREGREDNLLWCATTSRYERDEKWGFCPD. 16 disulfide bridges follow: C178–C204, C192–C219, C260–C354, C330–C346, C406–C501, C478–C493, C617–C634, C699–C796, C774–C788, C840–C938, C915–C930, C992–C1096, C1068–C1088, C1209–C1223, C1280–C1377, and C1354–C1369. C-type lectin domains lie at 229–353, 357–500, 504–641, 646–795, 799–937, 941–1095, 1099–1230, and 1235–1376; these read CDAV…LPYV, YLNP…LFYL, TGLV…KAMS, PVEN…REWI, PRDV…MPSI, KKVW…YGFV, MQDA…LQGA, and PTET…KGFI. N-linked (GlcNAc...) asparagine glycosylation occurs at N454. A glycan (N-linked (GlcNAc...) asparagine) is linked at N1057. A helical transmembrane segment spans residues 1393–1421; that stretch reads GPSHSVIPLTVALTLLVILAISTLSFCMY. At 1422–1463 the chain is on the cytoplasmic side; that stretch reads KHSHIIFGRLAQFRNPYYPSANFSTVHLEENILISDLEKNDQ. Residues 1436–1442 carry the Endocytosis signal motif; that stretch reads NPYYPSA.

Interacts with sPLA2-IB/PLA2G1B; this interaction mediates intracellular signaling as well as clearance of extracellular sPLA2-IB/PLA2G1B via endocytotic pathway. Interacts with sPLA2-X/PLA2G10; this interaction mediates sPLA2-X/PLA2G10 clearance and inactivation. In terms of processing, the secretory phospholipase A2 receptor form may be produced by the action of metalloproteinases. It contains all extracellular domains and only lacks transmembrane and cytosolic regions. It is however unclear whether this form is produced by proteolytic cleavage as suggested by some experiments, or by alternative splicing.

It is found in the cell membrane. It localises to the secreted. Functionally, receptor for secretory phospholipase A2 (sPLA2). Also able to bind to snake PA2-like toxins. Although its precise function remains unclear, binding of sPLA2 to its receptor participates in both positive and negative regulation of sPLA2 functions as well as clearance of sPLA2. Binding of sPLA2-IB/PLA2G1B induces various effects depending on the cell type, such as activation of the mitogen-activated protein kinase (MAPK) cascade to induce cell proliferation, the production of lipid mediators, selective release of arachidonic acid in bone marrow-derived mast cells. In neutrophils, binding of sPLA2-IB/PLA2G1B can activate p38 MAPK to stimulate elastase release and cell adhesion. May be involved in responses in pro-inflammatory cytokine productions during endotoxic shock. Also has endocytic properties and rapidly internalizes sPLA2 ligands, which is particularly important for the clearance of extracellular sPLA2s to protect their potent enzymatic activities. The soluble secretory phospholipase A2 receptor form is circulating and acts as a negative regulator of sPLA2 functions by blocking the biological functions of sPLA2-IB/PLA2G1B and sPLA2-X/PLA2G10. In Bos taurus (Bovine), this protein is Secretory phospholipase A2 receptor (PLA2R1).